Reading from the N-terminus, the 879-residue chain is Alanine--tRNA ligase (879 aa).

Residues His-566, His-570, Cys-668, and His-672 each coordinate Zn(2+).

It belongs to the class-II aminoacyl-tRNA synthetase family. The cofactor is Zn(2+).

The protein resides in the cytoplasm. It catalyses the reaction tRNA(Ala) + L-alanine + ATP = L-alanyl-tRNA(Ala) + AMP + diphosphate. Functionally, catalyzes the attachment of alanine to tRNA(Ala) in a two-step reaction: alanine is first activated by ATP to form Ala-AMP and then transferred to the acceptor end of tRNA(Ala). Also edits incorrectly charged Ser-tRNA(Ala) and Gly-tRNA(Ala) via its editing domain. This chain is Alanine--tRNA ligase, found in Listeria innocua serovar 6a (strain ATCC BAA-680 / CLIP 11262).